Here is a 199-residue protein sequence, read N- to C-terminus: ATP-dependent Clp protease proteolytic subunit (199 aa).

Serine 102 serves as the catalytic Nucleophile. Histidine 127 is a catalytic residue.

Belongs to the peptidase S14 family. In terms of assembly, component of the chloroplastic Clp protease core complex.

It localises to the plastid. It is found in the chloroplast stroma. It catalyses the reaction Hydrolysis of proteins to small peptides in the presence of ATP and magnesium. alpha-casein is the usual test substrate. In the absence of ATP, only oligopeptides shorter than five residues are hydrolyzed (such as succinyl-Leu-Tyr-|-NHMec, and Leu-Tyr-Leu-|-Tyr-Trp, in which cleavage of the -Tyr-|-Leu- and -Tyr-|-Trp bonds also occurs).. Its function is as follows. Cleaves peptides in various proteins in a process that requires ATP hydrolysis. Has a chymotrypsin-like activity. Plays a major role in the degradation of misfolded proteins. The sequence is that of ATP-dependent Clp protease proteolytic subunit from Physcomitrium patens (Spreading-leaved earth moss).